Reading from the N-terminus, the 339-residue chain is MEILLQKVYDQENLSKEEMTMIATEIFEGRLSKTKIAAFLMALKVKGETAEEMAGIAQAMQQVAIQVAFPAGTAMDNCGTGGDKSNSFNISTTSAFVLAAAGIPVAKHGNRSISSRSGSADVCQELGIDINMRPEDMTYLLEKVGIAFLFAPHVHPNMKYVMDVRKELGTPTIFNLIGPLTNPVHLETQLMGIYRRDLLEQTAEVLGQLGRKRAVVLNGAGFMDEASLAGENHYALYENGEVHLYTLRPEDVGLTSYPLEAITGGDAKENAAILRSVLDGEPGAYLDTVLLNAGFGLFANGKVATVQEGVDLARDLIRSGLAKQKLADLITYQKEVLAK.

5-phospho-alpha-D-ribose 1-diphosphate contacts are provided by residues Gly79, 82–83, Ser87, 89–92, 107–115, and Ser119; these read GD, NIST, and KHGNRSISS. Gly79 is a binding site for anthranilate. Ser91 provides a ligand contact to Mg(2+). An anthranilate-binding site is contributed by Asn110. Arg165 provides a ligand contact to anthranilate. Positions 224 and 225 each coordinate Mg(2+).

Belongs to the anthranilate phosphoribosyltransferase family. As to quaternary structure, homodimer. The cofactor is Mg(2+).

The enzyme catalyses N-(5-phospho-beta-D-ribosyl)anthranilate + diphosphate = 5-phospho-alpha-D-ribose 1-diphosphate + anthranilate. The protein operates within amino-acid biosynthesis; L-tryptophan biosynthesis; L-tryptophan from chorismate: step 2/5. In terms of biological role, catalyzes the transfer of the phosphoribosyl group of 5-phosphorylribose-1-pyrophosphate (PRPP) to anthranilate to yield N-(5'-phosphoribosyl)-anthranilate (PRA). The polypeptide is Anthranilate phosphoribosyltransferase (Listeria monocytogenes serotype 4a (strain HCC23)).